We begin with the raw amino-acid sequence, 337 residues long: Fructose-1,6-bisphosphatase class 1 (337 aa).

Residues Glu90, Asp112, Leu114, and Asp115 each coordinate Mg(2+). Residues 115–118 (DGSS), Asn211, and Lys277 each bind substrate. Glu283 provides a ligand contact to Mg(2+).

It belongs to the FBPase class 1 family. As to quaternary structure, homotetramer. It depends on Mg(2+) as a cofactor.

It localises to the cytoplasm. It carries out the reaction beta-D-fructose 1,6-bisphosphate + H2O = beta-D-fructose 6-phosphate + phosphate. The protein operates within carbohydrate biosynthesis; gluconeogenesis. The sequence is that of Fructose-1,6-bisphosphatase class 1 from Azotobacter vinelandii (strain DJ / ATCC BAA-1303).